Consider the following 82-residue polypeptide: Toxin Tpa7 (82 aa).

The signal sequence occupies residues 1-20 (MKGMILLISCLMLIEVVVEC). Positions 21–82 (KEGYPLDTLN…KIWDLKKNKC (62 aa)) constitute an LCN-type CS-alpha/beta domain. 4 disulfides stabilise this stretch: cysteine 32–cysteine 82, cysteine 36–cysteine 58, cysteine 44–cysteine 63, and cysteine 48–cysteine 65.

This sequence belongs to the long (4 C-C) scorpion toxin superfamily. Sodium channel inhibitor family. Beta subfamily. In terms of tissue distribution, expressed by the venom gland.

It is found in the secreted. In terms of biological role, beta toxins bind voltage-independently at site-4 of sodium channels (Nav) and shift the voltage of activation toward more negative potentials thereby affecting sodium channel activation and promoting spontaneous and repetitive firing. In Tityus pachyurus (Colombian scorpion), this protein is Toxin Tpa7.